The chain runs to 484 residues: tRNA sulfurtransferase (484 aa).

The 105-residue stretch at R63–Q167 folds into the THUMP domain. Residues L185 to M186, K267, G289, and Q298 contribute to the ATP site. An intrachain disulfide couples C346 to C457. Positions V405–P483 constitute a Rhodanese domain. C457 functions as the Cysteine persulfide intermediate in the catalytic mechanism.

The protein belongs to the ThiI family.

It localises to the cytoplasm. It catalyses the reaction [ThiI sulfur-carrier protein]-S-sulfanyl-L-cysteine + a uridine in tRNA + 2 reduced [2Fe-2S]-[ferredoxin] + ATP + H(+) = [ThiI sulfur-carrier protein]-L-cysteine + a 4-thiouridine in tRNA + 2 oxidized [2Fe-2S]-[ferredoxin] + AMP + diphosphate. It carries out the reaction [ThiS sulfur-carrier protein]-C-terminal Gly-Gly-AMP + S-sulfanyl-L-cysteinyl-[cysteine desulfurase] + AH2 = [ThiS sulfur-carrier protein]-C-terminal-Gly-aminoethanethioate + L-cysteinyl-[cysteine desulfurase] + A + AMP + 2 H(+). Its pathway is cofactor biosynthesis; thiamine diphosphate biosynthesis. Functionally, catalyzes the ATP-dependent transfer of a sulfur to tRNA to produce 4-thiouridine in position 8 of tRNAs, which functions as a near-UV photosensor. Also catalyzes the transfer of sulfur to the sulfur carrier protein ThiS, forming ThiS-thiocarboxylate. This is a step in the synthesis of thiazole, in the thiamine biosynthesis pathway. The sulfur is donated as persulfide by IscS. The polypeptide is tRNA sulfurtransferase (Pseudomonas paraeruginosa (strain DSM 24068 / PA7) (Pseudomonas aeruginosa (strain PA7))).